Consider the following 275-residue polypeptide: 4-diphosphocytidyl-2-C-methyl-D-erythritol kinase (275 aa).

Residue Lys14 is part of the active site. 98–108 is a binding site for ATP; it reads PMGAGLGGGSS. Asp140 is a catalytic residue.

It belongs to the GHMP kinase family. IspE subfamily.

It catalyses the reaction 4-CDP-2-C-methyl-D-erythritol + ATP = 4-CDP-2-C-methyl-D-erythritol 2-phosphate + ADP + H(+). It participates in isoprenoid biosynthesis; isopentenyl diphosphate biosynthesis via DXP pathway; isopentenyl diphosphate from 1-deoxy-D-xylulose 5-phosphate: step 3/6. Catalyzes the phosphorylation of the position 2 hydroxy group of 4-diphosphocytidyl-2C-methyl-D-erythritol. This Francisella tularensis subsp. tularensis (strain FSC 198) protein is 4-diphosphocytidyl-2-C-methyl-D-erythritol kinase.